A 121-amino-acid chain; its full sequence is CRISPR system Cms protein Csm2 (121 aa).

The protein belongs to the CRISPR-associated Csm2 family. In terms of assembly, part of the Csm effector complex that includes at least Cas10(1), Csm2(3), Csm3(5), Csm4(1), Csm5(1) and mature crRNA. The Csm complex is elongated and slightly twisted with a maximal length of 215 Angstroms and a diameter of 75-80 Angstroms. It has been modeled to have a central protein filamant of Csm3 subunits along which the dsRNA helix of paired crRNA and target RNA binds. The filament is capped at one end by Cas10 and Csm4 and at the other end by Csm5; ssDNA is thought to bind to the N-terminal HD domain of Cas10. Csm with a precursor crRNA does not include Csm5, while Cas6, the enzyme probably involved in pre-crRNA processing, is found associated with a subset of the Csm complex.

In terms of biological role, CRISPR (clustered regularly interspaced short palindromic repeat) is an adaptive immune system that provides protection against mobile genetic elements (viruses, transposable elements and conjugative plasmids). CRISPR clusters contain spacers, sequences complementary to antecedent mobile elements, and target invading nucleic acids. CRISPR clusters are transcribed and processed into CRISPR RNA (crRNA). The type III-A Csm effector complex binds crRNA and acts as a crRNA-guided RNase, DNase and cyclic oligoadenylate synthase; binding of target RNA cognate to the crRNA is required for all activities. In a heterologous host this Csm effector complex restricts ssRNA phage MS2, suggesting it may target RNA viruses in vivo. Csm functions as a non-specific ssDNase. Base-pairing between crRNA and target RNA to form a ternary Csm complex activates a ssDNase activity; target RNA cleavage suppresses the ssDNase, a temporal control that prevents uncontrolled DNA degradation. Viral RNA transcripts probably tether the Csm complex to the viral genome, recruiting Cas10 ssDNA activity which is able to degrade DNA in the transcription bubble, spatially controlling the DNase activity. Functionally, this subunit may be involved in monitoring complementarity of crRNA and target RNA. This Streptococcus thermophilus protein is CRISPR system Cms protein Csm2.